The chain runs to 397 residues: Flavohemoprotein A (397 aa).

The Globin domain maps to 2-137; that stretch reads SLSQQSISII…IAQAFIDAEA (136 aa). Residue His-84 coordinates heme b. Catalysis depends on charge relay system residues Tyr-94 and Glu-136. The interval 150–397 is reductase; it reads WRDTREFIVD…YEIFGPLTNV (248 aa). The region spanning 151–266 is the FAD-binding FR-type domain; the sequence is RDTREFIVDR…SPPAGDYVVD (116 aa). FAD is bound by residues Tyr-189 and 208–211; that span reads RHYS. 279 to 284 lines the NADP(+) pocket; the sequence is GVGITP. Residue 390–393 coordinates FAD; that stretch reads IFGP.

The protein belongs to the globin family. Two-domain flavohemoproteins subfamily. It in the C-terminal section; belongs to the flavoprotein pyridine nucleotide cytochrome reductase family. Requires FAD as cofactor. Heme b is required as a cofactor.

Its subcellular location is the cytoplasm. It catalyses the reaction 2 nitric oxide + NADPH + 2 O2 = 2 nitrate + NADP(+) + H(+). The catalysed reaction is 2 nitric oxide + NADH + 2 O2 = 2 nitrate + NAD(+) + H(+). Functionally, is involved in NO detoxification in an aerobic process, termed nitric oxide dioxygenase (NOD) reaction that utilizes O(2) and NAD(P)H to convert NO to nitrate, which protects the cell from various noxious nitrogen compounds. Therefore, plays a central role in the inducible response to nitrosative stress. In terms of biological role, in the presence of oxygen and NADH, it has NADH oxidase activity, which leads to the generation of superoxide and H(2)O(2). Under anaerobic conditions, it also exhibits nitric oxide reductase and FAD reductase activities. However, all these reactions are much lower than NOD activity. The polypeptide is Flavohemoprotein A (fhbA) (Dictyostelium discoideum (Social amoeba)).